The primary structure comprises 140 residues: Protein PsiE homolog (140 aa).

A run of 4 helical transmembrane segments spans residues 16–36 (IVLQYILNVALICLGVVLSVF), 57–77 (YHLIDSIVVFFLYFEFIVMII), 85–105 (HFPLRYFIYIGITAIVRLIII), and 110–130 (PLDLLLYACAIFVLISALFIA).

The protein belongs to the PsiE family.

The protein resides in the cell membrane. The polypeptide is Protein PsiE homolog (Bacillus cereus (strain ATCC 14579 / DSM 31 / CCUG 7414 / JCM 2152 / NBRC 15305 / NCIMB 9373 / NCTC 2599 / NRRL B-3711)).